Consider the following 460-residue polypeptide: Pyruvate dehydrogenase E1 component subunit beta (460 aa).

Positions 2 to 78 constitute a Lipoyl-binding domain; the sequence is PVEILMPALS…KVNTPIAVLL (77 aa). K43 bears the N6-lipoyllysine mark. Residues 91–131 are disordered; it reads KTEAPKAETPKPAAAEAPAASAAPVAAQPKADVPSDPAIPA. Low complexity predominate over residues 100–121; that stretch reads PKPAAAEAPAASAAPVAAQPKA. Thiamine diphosphate is bound at residue E194.

Heterodimer of an alpha and a beta chain. (R)-lipoate is required as a cofactor. Requires thiamine diphosphate as cofactor.

It carries out the reaction N(6)-[(R)-lipoyl]-L-lysyl-[protein] + pyruvate + H(+) = N(6)-[(R)-S(8)-acetyldihydrolipoyl]-L-lysyl-[protein] + CO2. In terms of biological role, the pyruvate dehydrogenase complex catalyzes the overall conversion of pyruvate to acetyl-CoA and CO(2). It contains multiple copies of three enzymatic components: pyruvate dehydrogenase (E1), dihydrolipoamide acetyltransferase (E2) and lipoamide dehydrogenase (E3). This Rhizobium meliloti (strain 1021) (Ensifer meliloti) protein is Pyruvate dehydrogenase E1 component subunit beta (pdhB).